We begin with the raw amino-acid sequence, 271 residues long: Putative glucose-6-phosphate 1-epimerase (271 aa).

Substrate is bound by residues Arg71 and Arg93. The active site involves His151. Residue Asp193 coordinates substrate. Glu249 is a catalytic residue.

It belongs to the glucose-6-phosphate 1-epimerase family.

The catalysed reaction is alpha-D-glucose 6-phosphate = beta-D-glucose 6-phosphate. This chain is Putative glucose-6-phosphate 1-epimerase, found in Haemophilus influenzae (strain ATCC 51907 / DSM 11121 / KW20 / Rd).